Consider the following 56-residue polypeptide: Large ribosomal subunit protein bL33 (56 aa).

The protein belongs to the bacterial ribosomal protein bL33 family.

This Rickettsia bellii (strain OSU 85-389) protein is Large ribosomal subunit protein bL33.